The sequence spans 82 residues: Protein transport protein Sec61 subunit beta (82 aa).

Met-1 bears the N-acetylmethionine mark. The segment at 1–34 (MVGSGAPQRGSAAATASMRRRKPTSGAGGGGASG) is disordered. At 1–55 (MVGSGAPQRGSAAATASMRRRKPTSGAGGGGASGGAAGSMLQFYTDDAPGLKISP) the chain is on the cytoplasmic side. A helical membrane pass occupies residues 56 to 76 (NVVLIMSIGFIAFVAVLHVMG).

This sequence belongs to the SEC61-beta family. In terms of assembly, heterotrimeric complex composed of SEC61-alpha, SEC61-beta and SEC61-gamma.

It is found in the endoplasmic reticulum membrane. Its function is as follows. Necessary for protein translocation in the endoplasmic reticulum. The sequence is that of Protein transport protein Sec61 subunit beta from Arabidopsis thaliana (Mouse-ear cress).